The following is a 158-amino-acid chain: Phosphopantetheine adenylyltransferase (158 aa).

Ser9 is a binding site for substrate. ATP contacts are provided by residues 9–10 and His17; that span reads SF. Positions 41, 73, and 87 each coordinate substrate. ATP-binding positions include 88–90, Glu98, and 122–128; these read GLR and NQNISSS.

Belongs to the bacterial CoaD family. As to quaternary structure, homohexamer. Mg(2+) is required as a cofactor.

It is found in the cytoplasm. It carries out the reaction (R)-4'-phosphopantetheine + ATP + H(+) = 3'-dephospho-CoA + diphosphate. It participates in cofactor biosynthesis; coenzyme A biosynthesis; CoA from (R)-pantothenate: step 4/5. Its function is as follows. Reversibly transfers an adenylyl group from ATP to 4'-phosphopantetheine, yielding dephospho-CoA (dPCoA) and pyrophosphate. This Leuconostoc citreum (strain KM20) protein is Phosphopantetheine adenylyltransferase.